A 223-amino-acid chain; its full sequence is Endonuclease V (223 aa).

Mg(2+)-binding residues include Asp35 and Asp103.

It belongs to the endonuclease V family. Mg(2+) serves as cofactor.

It localises to the cytoplasm. The enzyme catalyses Endonucleolytic cleavage at apurinic or apyrimidinic sites to products with a 5'-phosphate.. DNA repair enzyme involved in the repair of deaminated bases. Selectively cleaves double-stranded DNA at the second phosphodiester bond 3' to a deoxyinosine leaving behind the intact lesion on the nicked DNA. This is Endonuclease V from Shigella dysenteriae serotype 1 (strain Sd197).